The primary structure comprises 91 residues: Sec-independent protein translocase protein TatA (91 aa).

Residues 1-21 (MGAMSPWHWAIVALVVIILFG) traverse the membrane as a helical segment. The tract at residues 44–91 (KEMQNDNSTPAPTAQQSAPAELPVADTTTAPVTPPAPVQPQHTEPKSA) is disordered. Over residues 51-74 (STPAPTAQQSAPAELPVADTTTAP) the composition is skewed to low complexity.

The protein belongs to the TatA/E family. In terms of assembly, the Tat system comprises two distinct complexes: a TatABC complex, containing multiple copies of TatA, TatB and TatC subunits, and a separate TatA complex, containing only TatA subunits. Substrates initially bind to the TatABC complex, which probably triggers association of the separate TatA complex to form the active translocon.

Its subcellular location is the cell membrane. In terms of biological role, part of the twin-arginine translocation (Tat) system that transports large folded proteins containing a characteristic twin-arginine motif in their signal peptide across membranes. TatA could form the protein-conducting channel of the Tat system. This Rhodococcus jostii (strain RHA1) protein is Sec-independent protein translocase protein TatA.